The sequence spans 304 residues: Nod factor export ATP-binding protein I (304 aa).

The ABC transporter domain maps to 6 to 236 (IDFQQVEKRY…EIGCDVIEIY (231 aa)). Residue 38 to 45 (GPNGAGKT) coordinates ATP.

Belongs to the ABC transporter superfamily. Lipooligosaccharide exporter (TC 3.A.1.102) family. In terms of assembly, the complex is composed of two ATP-binding proteins (NodI) and two transmembrane proteins (NodJ).

It localises to the cell inner membrane. Part of the ABC transporter complex NodIJ involved in the export of the nodulation factors (Nod factors), the bacterial signal molecules that induce symbiosis and subsequent nodulation induction. Nod factors are LCO (lipo-chitin oligosaccharide), a modified beta-1,4-linked N-acetylglucosamine oligosaccharide. This subunit is responsible for energy coupling to the transport system. The chain is Nod factor export ATP-binding protein I from Burkholderia pseudomallei (strain 1710b).